The chain runs to 366 residues: Growth/differentiation factor 3 (366 aa).

A signal peptide spans 1–22 (MQPYQRLLALGFLLLTLPWGQT). The propeptide occupies 23 to 252 (SEFQDSDLLQ…HCHPSSRKRR (230 aa)). 2 N-linked (GlcNAc...) asparagine glycosylation sites follow: N113 and N308. 3 cysteine pairs are disulfide-bonded: C266-C331, C295-C363, and C299-C365.

Belongs to the TGF-beta family. Homodimer. Heterodimer (Potential). But, in contrast to other members of this family, cannot be disulfide-linked. In terms of processing, synthesized as large precursor molecule that undergo proteolytic cleavage, releasing the pro-domain from the active, receptor binding, C-terminal region of the molecule. As to expression, primarily in adult bone marrow, spleen, thymus and adipose tissue.

It localises to the secreted. The protein localises to the cytoplasm. Its function is as follows. Growth factor involved in early embryonic development and adipose-tissue homeostasis. During embryogenesis controls formation of anterior visceral endoderm and mesoderm and the establishment of anterior-posterior identity through a receptor complex comprising the receptor ACVR1B and the coreceptor CRIPTO. Regulates adipose-tissue homeostasis and energy balance under nutrient overload in part by signaling through the receptor complex based on ACVR1C and CRIPTO. This is Growth/differentiation factor 3 (Gdf3) from Mus musculus (Mouse).